The chain runs to 448 residues: MSESSAINGNHYEQLHQGRTKMYKSKVAVVLGAQWGDEGKGKVVDMLASDVDIVCRCQGGNNAGHTVVANGTEFDFHLLPSGVVNEKCVSVIGNGVVIHLPSLFDEVLKNEAKGLQHLENRLIISDRAHLVFDFHQHVDGMQEAEKGGKSLGTTKKGIGPAYSSKATRNGIRVGELLGDFNLFSDKFKSIVATHVRLFPSINVDVEAELARYKDYAEKVRPYVKDTICFLHTALRNGKTILVEGANAAMLDIDFGTYPYVTSSNCSIGGVLTGLGLPPQTIGEVIGVVKAYTTRVGDGPFPTEQLNDIGDLLQTRGFEIGVTTKRKRRCGWLDIPLLKYTSLVNGYTCICITKLDILDTLPEIKVAVAYKKPNGEKLDHFPGTIAELGAIEVEYAVLPGWQTSTEHIRNFKELPENAQNYVRFLESELSVPVRWVGVGKGRESIINVH.

GTP-binding positions include 36 to 42 (GDEGKGK) and 64 to 66 (GHT). The active-site Proton acceptor is Asp37. Residues Asp37 and Gly64 each coordinate Mg(2+). IMP is bound by residues 37 to 40 (DEGK), 62 to 65 (NAGH), Thr154, Arg168, Asn246, Thr261, and Arg325. Residue His65 is the Proton donor of the active site. 321–327 (VTTKRKR) is a substrate binding site. GTP-binding positions include Arg327, 353-355 (KLD), and 436-438 (GVG).

It belongs to the adenylosuccinate synthetase family. In terms of assembly, homodimer. The cofactor is Mg(2+).

The protein resides in the cytoplasm. It carries out the reaction IMP + L-aspartate + GTP = N(6)-(1,2-dicarboxyethyl)-AMP + GDP + phosphate + 2 H(+). Its pathway is purine metabolism; AMP biosynthesis via de novo pathway; AMP from IMP: step 1/2. Its function is as follows. Plays an important role in the de novo pathway and in the salvage pathway of purine nucleotide biosynthesis. Catalyzes the first committed step in the biosynthesis of AMP from IMP. The sequence is that of Adenylosuccinate synthetase from Drosophila ananassae (Fruit fly).